The following is a 68-amino-acid chain: Peptide Hp1090 (68 aa).

Positions 1 to 23 (MKTQFAIFLITLVLFQMFSQSDA) are cleaved as a signal peptide. F36 carries the post-translational modification Phenylalanine amide. A propeptide spanning residues 40 to 68 (GLSDLDDLDESFDGEVSQADIDFLKELMQ) is cleaved from the precursor.

It belongs to the non-disulfide-bridged peptide (NDBP) superfamily. Short antimicrobial peptide (group 4) family. Expressed by the venom gland.

Its subcellular location is the secreted. The protein localises to the target cell membrane. Amphipathic peptide which inhibits the growth of Gram-positive bacteria. The protein is Peptide Hp1090 of Heterometrus petersii (Asian forest scorpion).